A 312-amino-acid polypeptide reads, in one-letter code: MVGFLRALTAASAVPAAAAVAAVALSTNSSSSSRLRLPSPASLPSLSSAYAAAPASGSARKPNAVPPMAAAAATADLSAAADKGAALPELMTEFMVDMKCDGCVTAVKNKFQTLEGIKNIEVDLNNQVVRVLGSLPVNTMLDTLHQTGRDARLIGQGNPNDFLVSAAVAEFKGPVIFGVVRLAQVNMELAIVEATFSGLSPGKHGWSINEFGDLTRGAESTGKVYNPSDYRSNKPLGDLGTLEAGEKGEAQFSASKEKLKVVDLIGRSIALYATEDRSDPGIAAAVIARSAGVGENYKKLCTCDGVTIWESS.

A chloroplast-targeting transit peptide spans M1–S78. Residues E89 to R152 enclose the HMA domain. Residues C100, C103, C301, and C303 each contribute to the Cu cation site.

The protein in the C-terminal section; belongs to the Cu-Zn superoxide dismutase family. Requires Cu(2+) as cofactor.

The protein resides in the plastid. It is found in the chloroplast. Functionally, copper chaperone for superoxide dismutases (SODs). Binds copper ions and delivers them specifically to SODs. Is required for assistance in SODs disulfide bond formation and thereby activation of SODs. The polypeptide is Copper chaperone for superoxide dismutase, chloroplastic (CCS) (Oryza sativa subsp. japonica (Rice)).